We begin with the raw amino-acid sequence, 644 residues long: MSDVKVYPVDPNVAANALINEEQYQEMYKRSIDDPAAFWAEQAEARIDWFKKWDNVLDFDLRKGHIKWFEGAKLNVSYNCIDRHLEKRGDKVAILWEGDNPAADRKITYRELSALVNKFANALKARGVKKGDRVCIYMPMIPEAAVAMLACTRIGAVHSIVFGGFSPDALRDRIIDAECRVVITADGGMRGSKKIPLRKNVETALAQCPNVHTCFVVQDTQLEIEWTEGRDVWYHEAIAAASADCPPEEMDAEDPLFVLYTSGSTGKPKGVLHTTGGYLLYASITHQYIFDYHEDDIYWCTADVGWVTGHTYIVYGPLANGATTLMFEGVPTYPDASRFWQVVDKHQVSIFYTAPTAIRSIMSQGDALVKATSRQSLRILGSVGEPINPEAWEWYYHVVGEGRCPIVDTWWQTETGGILITPLPGATPLKPGSATRPFFGVNPKVLSNEGKEMEGPCEGILVLDHPWPGMMRTVYGDHDRFINTYFANYPGYYFCGDGCRRDEDGYYWITGRVDDVINVSGHRLGTAEVESALVLHDQVAEAAVVGMPHEIKGQGIYAYVTLMSGVEPSDALKTELVKLVRKEIGPIASLDVIQFAPGLPKTRSGKIMRRILRKIAAHEVDTLGDTSTLADPSVVQNLIDNMPK.

CoA-binding positions include 190–193 (RGSK) and Thr308. ATP contacts are provided by residues 384 to 386 (GEP), 408 to 413 (DTWWQT), Asp497, and Arg512. Ser520 provides a ligand contact to CoA. Residue Arg523 participates in ATP binding. Positions 534, 536, and 539 each coordinate Mg(2+). Arg581 lines the CoA pocket. Lys606 is subject to N6-acetyllysine.

This sequence belongs to the ATP-dependent AMP-binding enzyme family. Mg(2+) serves as cofactor. In terms of processing, acetylated. Deacetylation by the SIR2-homolog deacetylase activates the enzyme.

It catalyses the reaction acetate + ATP + CoA = acetyl-CoA + AMP + diphosphate. Catalyzes the conversion of acetate into acetyl-CoA (AcCoA), an essential intermediate at the junction of anabolic and catabolic pathways. AcsA undergoes a two-step reaction. In the first half reaction, AcsA combines acetate with ATP to form acetyl-adenylate (AcAMP) intermediate. In the second half reaction, it can then transfer the acetyl group from AcAMP to the sulfhydryl group of CoA, forming the product AcCoA. In Magnetococcus marinus (strain ATCC BAA-1437 / JCM 17883 / MC-1), this protein is Acetyl-coenzyme A synthetase.